We begin with the raw amino-acid sequence, 676 residues long: Forkhead box protein biniou (676 aa).

Disordered stretches follow at residues 22-50 (YHDP…GHPY), 131-160 (AHSA…SSST), 203-232 (QEQA…SRIS), 249-312 (NYSS…PEKP), and 583-651 (IQHA…AYLP). Basic residues predominate over residues 34–48 (PHAHSHPHQHTHTGH). Over residues 133–160 (SAGSASPQSNSKTPTDLPQDLQYASSST) the composition is skewed to polar residues. Residues 203–220 (QEQAGQQQPQQLPAQQLQ) are compositionally biased toward low complexity. A compositionally biased stretch (polar residues) spans 257–273 (PAKSLNGSESSPPSQNH). The segment at residues 311 to 408 (KPALSYINMI…DEGSLRRRPR (98 aa)) is a DNA-binding region (fork-head). Positions 583–593 (IQHAQAQAQAQ) are enriched in low complexity. The span at 594-611 (AHHHHHQHHASHPSHSHQ) shows a compositional bias: basic residues. A compositionally biased stretch (low complexity) spans 612 to 625 (GHGSMHQNHGTSST). Residues 637 to 647 (GIDHSPIDRKP) are compositionally biased toward basic and acidic residues.

Binds to DNA. In embryo, expressed in all types of visceral muscles and their progenitors (at protein level). In late stage 10 embryo, expressed in the caudal visceral mesoderm and trunk and hindgut visceral mesoderm progenitors.

It is found in the nucleus. In terms of biological role, component of a regulatory network controlling visceral mesoderm development and midgut morphogenesis. Transcriptional regulator involved in the activation of a large number of genes in the visceral mesoderm including betaTub60D, dpp and Hand. Binds to and regulates a number of enhancers driving expression in the visceral mesoderm in a temporally and spatially restricted manner. Also to binds to enhancers cooperatively with activators, such as bap or HLH54F, to coregulate expression of shared target genes in the visceral mesoderm. Binds to the Ndg enhancer and drives expression of Ndg in the late visceral musculature. May be involved in the transcriptional regulation of wupA in the visceral mesoderm. Plays an indirect role in the later stages of salivary gland positioning. This chain is Forkhead box protein biniou (bin), found in Drosophila melanogaster (Fruit fly).